The primary structure comprises 473 residues: H(+)/Cl(-) exchange transporter ClcA (473 aa).

Residues 1–32 (MKTDTPSLETPQAARLRRRQLIRQLLERDKTP) are Cytoplasmic-facing. Residues 33-69 (LAILFMAAVVGTLVGLAAVAFDKGVAWLQNQRMEALV) traverse the membrane as a helical segment. Over 70–76 (HTADNYP) the chain is Periplasmic. A helical transmembrane segment spans residues 77 to 100 (LLLTVAFLCSAVLAMFGYFLVRKY). A Selectivity filter part_1 motif is present at residues 106–110 (GSGIP). Ser107 is a binding site for chloride. Residues 109–116 (IPEIEGAL) constitute an intramembrane region (helical). The Cytoplasmic portion of the chain corresponds to 117-123 (EDQRPVR). 2 helical membrane-spanning segments follow: residues 124–141 (WWRV…TLGG) and 148–166 (EGPT…LDIF). A Selectivity filter part_2 motif is present at residues 146-150 (GREGP). Residues 167–176 (RLKGDEARHT) lie on the Cytoplasmic side of the membrane. 2 intramembrane regions (helical) span residues 177–189 (LLAT…LAAA) and 193–201 (PLAGILFII). The Cytoplasmic portion of the chain corresponds to 202–214 (EEMRPQFRYTLIS). The chain crosses the membrane as a helical span at residues 215–232 (IKAVFIGVIMSTIMYRIF). Topologically, residues 233–252 (NHEVALIDVGKLSDAPLNTL) are periplasmic. The helical transmembrane segment at 253–281 (WLYLILGIIFGIFGPIFNKWVLGMQDLLH) threads the bilayer. Topologically, residues 282–287 (RVHGGN) are cytoplasmic. The helical transmembrane segment at 288-309 (ITKWVLMGGAIGGLCGLLGFVA) threads the bilayer. At 310–329 (PATSGGGFNLIPIATAGNFS) the chain is on the periplasmic side. The next 2 membrane-spanning stretches (helical) occupy residues 330–349 (MGML…LCFS) and 355–376 (GIFA…MVVV). The Selectivity filter part_3 motif lies at 355–359 (GIFAP). Ile356 and Phe357 together coordinate chloride. The Periplasmic segment spans residues 377–386 (ELFPQYHLEA). Residues 387 to 401 (GTFAIAGMGALLAAS) constitute an intramembrane region (helical). Positions 402–404 (IRA) form an intramembrane region, note=Loop between two helices. Positions 405–416 (PLTGIILVLEMT) form an intramembrane region, helical. Residues 417-421 (DNYQL) constitute an intramembrane region (note=Loop between two helices). A helical transmembrane segment spans residues 422 to 438 (ILPMIITGLGATLLAQF). At 439-473 (TGGKPLYSEILARTLAKQEAEQLARSKAASASENT) the chain is on the cytoplasmic side. Residue Tyr445 coordinates chloride.

Belongs to the chloride channel (TC 2.A.49) family. ClcA subfamily. In terms of assembly, homodimer.

The protein resides in the cell inner membrane. It catalyses the reaction 2 chloride(in) + H(+)(out) = 2 chloride(out) + H(+)(in). Proton-coupled chloride transporter. Functions as antiport system and exchanges two chloride ions for 1 proton. Probably acts as an electrical shunt for an outwardly-directed proton pump that is linked to amino acid decarboxylation, as part of the extreme acid resistance (XAR) response. The sequence is that of H(+)/Cl(-) exchange transporter ClcA from Shigella boydii serotype 4 (strain Sb227).